The sequence spans 698 residues: Sialic acid-binding Ig-like lectin 11 (698 aa).

Residues methionine 1–serine 27 form the signal peptide. Residues leucine 28 to leucine 561 are Extracellular-facing. In terms of domain architecture, Ig-like V-type spans aspartate 31–glutamate 134. 3 disulfides stabilise this stretch: cysteine 49-cysteine 186, cysteine 54-cysteine 114, and cysteine 177-cysteine 228. N-linked (GlcNAc...) asparagine glycans are attached at residues asparagine 55 and asparagine 90. Position 132 (arginine 132) interacts with N-acetylneuraminate. Ig-like C2-type domains are found at residues proline 159–arginine 244, proline 251–serine 350, and proline 355–serine 452. Residue asparagine 262 is glycosylated (N-linked (GlcNAc...) asparagine). Cysteines 287 and 334 form a disulfide. 2 N-linked (GlcNAc...) asparagine glycosylation sites follow: asparagine 366 and asparagine 375. A disulfide bridge connects residues cysteine 391 and cysteine 436. 2 N-linked (GlcNAc...) asparagine glycosylation sites follow: asparagine 497 and asparagine 515. Residues glycine 562 to valine 584 form a helical membrane-spanning segment. Topologically, residues lysine 585 to lysine 698 are cytoplasmic. Residues alanine 596–glycine 635 are disordered. Residues leucine 642 to leucine 647 carry the ITIM motif motif. Tyrosine 668 is modified (phosphotyrosine). A disordered region spans residues threonine 675–lysine 698.

This sequence belongs to the immunoglobulin superfamily. SIGLEC (sialic acid binding Ig-like lectin) family. As to quaternary structure, interacts with PTPN6/SHP-1 and PTPN11/SHP-2 upon phosphorylation. Phosphorylated on tyrosine residues. Expressed by macrophages in various tissues including Kupffer cells. Also found in brain microglia.

The protein localises to the membrane. Functionally, putative adhesion molecule that mediates sialic-acid dependent binding to cells. Preferentially binds to alpha-2,8-linked sialic acid. The sialic acid recognition site may be masked by cis interactions with sialic acids on the same cell surface. In the immune response, may act as an inhibitory receptor upon ligand induced tyrosine phosphorylation by recruiting cytoplasmic phosphatase(s) via their SH2 domain(s) that block signal transduction through dephosphorylation of signaling molecules. The sequence is that of Sialic acid-binding Ig-like lectin 11 (SIGLEC11) from Homo sapiens (Human).